The sequence spans 156 residues: Small ribosomal subunit protein uS7 (156 aa).

Belongs to the universal ribosomal protein uS7 family. Part of the 30S ribosomal subunit. Contacts proteins S9 and S11.

One of the primary rRNA binding proteins, it binds directly to 16S rRNA where it nucleates assembly of the head domain of the 30S subunit. Is located at the subunit interface close to the decoding center, probably blocks exit of the E-site tRNA. The polypeptide is Small ribosomal subunit protein uS7 (Pseudoalteromonas translucida (strain TAC 125)).